The following is a 360-amino-acid chain: Mannonate dehydratase (360 aa).

It belongs to the mannonate dehydratase family. It depends on Fe(2+) as a cofactor. Mn(2+) serves as cofactor.

The enzyme catalyses D-mannonate = 2-dehydro-3-deoxy-D-gluconate + H2O. It participates in carbohydrate metabolism; pentose and glucuronate interconversion. In terms of biological role, catalyzes the dehydration of D-mannonate. In Thermotoga sp. (strain RQ2), this protein is Mannonate dehydratase.